Reading from the N-terminus, the 88-residue chain is Small ribosomal subunit protein uS17 (88 aa).

It belongs to the universal ribosomal protein uS17 family. In terms of assembly, part of the 30S ribosomal subunit.

One of the primary rRNA binding proteins, it binds specifically to the 5'-end of 16S ribosomal RNA. This Lactobacillus helveticus (strain DPC 4571) protein is Small ribosomal subunit protein uS17.